Reading from the N-terminus, the 607-residue chain is UvrABC system protein C (607 aa).

Residues 16–94 (GRPGVYRMFD…IKEWRPPYNI (79 aa)) enclose the GIY-YIG domain. The region spanning 203–238 (NALSEELSASMEKASMALEFERAAELRDQISMLRRV) is the UVR domain.

The protein belongs to the UvrC family. Interacts with UvrB in an incision complex.

Its subcellular location is the cytoplasm. In terms of biological role, the UvrABC repair system catalyzes the recognition and processing of DNA lesions. UvrC both incises the 5' and 3' sides of the lesion. The N-terminal half is responsible for the 3' incision and the C-terminal half is responsible for the 5' incision. The polypeptide is UvrABC system protein C (Ectopseudomonas mendocina (strain ymp) (Pseudomonas mendocina)).